The sequence spans 618 residues: Citrolysin protein 1 (618 aa).

In terms of biological role, bacterial hemolysins are exotoxins that attack blood cell membranes and cause cell rupture by mechanisms not clearly defined. This chain is Citrolysin protein 1, found in Citrobacter freundii.